A 101-amino-acid chain; its full sequence is Iron-sulfur cluster assembly protein CyaY (101 aa).

The protein belongs to the frataxin family.

Involved in iron-sulfur (Fe-S) cluster assembly. May act as a regulator of Fe-S biogenesis. This is Iron-sulfur cluster assembly protein CyaY from Rickettsia akari (strain Hartford).